Consider the following 172-residue polypeptide: DNA-directed RNA polymerase II subunit rpb7 (172 aa).

This sequence belongs to the eukaryotic RPB7/RPC8 RNA polymerase subunit family. In terms of assembly, component of the RNA polymerase II (Pol II) complex consisting of 12 subunits. RPB4 and RPB7 form a subcomplex that protrudes from the 10-subunit Pol II core complex.

Its subcellular location is the nucleus. In terms of biological role, DNA-dependent RNA polymerase catalyzes the transcription of DNA into RNA using the four ribonucleoside triphosphates as substrates. Component of RNA polymerase II which synthesizes mRNA precursors and many functional non-coding RNAs. Pol II is the central component of the basal RNA polymerase II transcription machinery. It is composed of mobile elements that move relative to each other. RPB7 is part of a subcomplex with RPB4 that binds to a pocket formed by RPB1, RPB2 and RPB6 at the base of the clamp element. The RPB4-RPB7 subcomplex seems to lock the clamp via RPB7 in the closed conformation thus preventing double-stranded DNA to enter the active site cleft. The RPB4-RPB7 subcomplex binds single-stranded DNA and RNA. The polypeptide is DNA-directed RNA polymerase II subunit rpb7 (polr2g) (Dictyostelium discoideum (Social amoeba)).